The primary structure comprises 288 residues: UDP-3-O-acyl-N-acetylglucosamine deacetylase (288 aa).

Positions 79, 236, and 240 each coordinate Zn(2+). Histidine 263 acts as the Proton donor in catalysis.

It belongs to the LpxC family. Zn(2+) serves as cofactor.

It carries out the reaction a UDP-3-O-[(3R)-3-hydroxyacyl]-N-acetyl-alpha-D-glucosamine + H2O = a UDP-3-O-[(3R)-3-hydroxyacyl]-alpha-D-glucosamine + acetate. Its pathway is glycolipid biosynthesis; lipid IV(A) biosynthesis; lipid IV(A) from (3R)-3-hydroxytetradecanoyl-[acyl-carrier-protein] and UDP-N-acetyl-alpha-D-glucosamine: step 2/6. Its function is as follows. Catalyzes the hydrolysis of UDP-3-O-myristoyl-N-acetylglucosamine to form UDP-3-O-myristoylglucosamine and acetate, the committed step in lipid A biosynthesis. In Rickettsia africae (strain ESF-5), this protein is UDP-3-O-acyl-N-acetylglucosamine deacetylase.